Consider the following 400-residue polypeptide: Small ribosomal subunit protein bS1 (400 aa).

S1 motif domains are found at residues 17–87, 107–173, 194–262, and 279–348; these read GDVV…VTYL, EEVV…LSRR, GDVV…LSLK, and GDVV…LSIK. A compositionally biased stretch (basic and acidic residues) spans 351–366; that stretch reads EERPAQEEGQKEEKRA. The segment at 351 to 400 is disordered; sequence EERPAQEEGQKEEKRAARPRRPRRQEKRDFELPETQTGFSMADLFGDIEL.

This sequence belongs to the bacterial ribosomal protein bS1 family. In terms of processing, phosphorylated.

Binds mRNA; thus facilitating recognition of the initiation point. It is needed to translate mRNA with a short Shine-Dalgarno (SD) purine-rich sequence. The chain is Small ribosomal subunit protein bS1 (rpsA) from Streptococcus pneumoniae (strain ATCC BAA-255 / R6).